A 187-amino-acid polypeptide reads, in one-letter code: Elongation factor P (187 aa).

The protein belongs to the elongation factor P family.

The protein resides in the cytoplasm. It participates in protein biosynthesis; polypeptide chain elongation. In terms of biological role, involved in peptide bond synthesis. Stimulates efficient translation and peptide-bond synthesis on native or reconstituted 70S ribosomes in vitro. Probably functions indirectly by altering the affinity of the ribosome for aminoacyl-tRNA, thus increasing their reactivity as acceptors for peptidyl transferase. The chain is Elongation factor P from Rhodococcus opacus (strain B4).